The following is a 226-amino-acid chain: 1-hydroxy-2-glutathionyl-2-methyl-3-butene dehydrogenase (226 aa).

Belongs to the short-chain dehydrogenases/reductases (SDR) family.

It catalyses the reaction 2-glutathionyl-2-methylbut-3-en-1-ol + 2 NAD(+) + H2O = 2-glutathionyl-2-methylbut-3-enoate + 2 NADH + 3 H(+). The enzyme catalyses 2-glutathionyl-2-methylbut-3-en-1-ol + NAD(+) = 2-glutathionyl-2-methylbut-3-enal + NADH + H(+). It carries out the reaction 2-glutathionyl-2-methylbut-3-enal + NAD(+) + H2O = 2-glutathionyl-2-methylbut-3-enoate + NADH + 2 H(+). In terms of biological role, involved in isoprene degradation. Catalyzes the two-step NAD(+)-dependent oxidation of 2-glutathionyl-2-methylbut-3-en-1-ol (HGMB) to 2-glutathionyl-2-methylbut-3-enoate (GMBA). In Rhodococcus sp. (strain AD45), this protein is 1-hydroxy-2-glutathionyl-2-methyl-3-butene dehydrogenase.